Reading from the N-terminus, the 347-residue chain is Quinolinate synthase (347 aa).

Iminosuccinate contacts are provided by His47 and Ser68. Cys113 lines the [4Fe-4S] cluster pocket. Iminosuccinate contacts are provided by residues 139–141 (YAN) and Ser156. Cys200 is a binding site for [4Fe-4S] cluster. Residues 226–228 (HPE) and Thr243 each bind iminosuccinate. Cys297 provides a ligand contact to [4Fe-4S] cluster.

It belongs to the quinolinate synthase family. Type 1 subfamily. [4Fe-4S] cluster serves as cofactor.

Its subcellular location is the cytoplasm. The enzyme catalyses iminosuccinate + dihydroxyacetone phosphate = quinolinate + phosphate + 2 H2O + H(+). It functions in the pathway cofactor biosynthesis; NAD(+) biosynthesis; quinolinate from iminoaspartate: step 1/1. Functionally, catalyzes the condensation of iminoaspartate with dihydroxyacetone phosphate to form quinolinate. The chain is Quinolinate synthase from Escherichia coli O127:H6 (strain E2348/69 / EPEC).